We begin with the raw amino-acid sequence, 345 residues long: L-threonine 3-dehydrogenase (345 aa).

Residue Cys-39 participates in Zn(2+) binding. Active-site charge relay system residues include Thr-41 and His-44. Zn(2+) is bound by residues His-64, Glu-65, Cys-94, Cys-97, Cys-100, and Cys-108. NAD(+) is bound by residues Ile-176, Asp-196, Arg-201, 263 to 265 (LGI), and 287 to 288 (VY).

It belongs to the zinc-containing alcohol dehydrogenase family. In terms of assembly, homotetramer. Requires Zn(2+) as cofactor.

The protein localises to the cytoplasm. The catalysed reaction is L-threonine + NAD(+) = (2S)-2-amino-3-oxobutanoate + NADH + H(+). It participates in amino-acid degradation; L-threonine degradation via oxydo-reductase pathway; glycine from L-threonine: step 1/2. Functionally, catalyzes the NAD(+)-dependent oxidation of L-threonine to 2-amino-3-ketobutyrate. The polypeptide is L-threonine 3-dehydrogenase (Anaeromyxobacter dehalogenans (strain 2CP-C)).